Consider the following 707-residue polypeptide: Lipase maturation factor 2 (707 aa).

A run of 9 helical transmembrane segments spans residues 11–31 (FLWG…AQIP), 78–98 (MEMI…FSFL), 102–122 (LVFL…QVFL), 126–146 (WDSL…VHAL), 220–240 (FSVV…FLPF), 256–276 (ILII…VLCC), 306–326 (LYSL…FWTV), 358–378 (ITFP…LKGM), and 398–418 (VIFS…YTYI). An N-linked (GlcNAc...) asparagine glycan is attached at asparagine 483. Residues 634–654 (LLLHSFIFGIFTIYFLQAMFG) form a helical membrane-spanning segment. Positions 659 to 707 (PGVAKQRHSKPPNEKKKQKSNSGQGESAAAKSSGHGADTVRRNKKNEKS) are disordered. The span at 696–707 (DTVRRNKKNEKS) shows a compositional bias: basic and acidic residues.

The protein belongs to the lipase maturation factor family.

It is found in the endoplasmic reticulum membrane. In terms of biological role, involved in the maturation of specific proteins in the endoplasmic reticulum. In Xenopus tropicalis (Western clawed frog), this protein is Lipase maturation factor 2 (lmf2).